The chain runs to 62 residues: Ponericin-W-like 32.2 (62 aa).

Residues 1-23 (MKCKKQLLVIFFAYFLVVNESEA) form the signal peptide. A propeptide spanning residues 49–62 (RALMKRDLEDIMDP) is cleaved from the precursor.

It belongs to the non-disulfide-bridged peptide (NDBP) superfamily. Medium-length antimicrobial peptide (group 3) family. Ponericin-W subfamily. As to expression, expressed by the venom gland.

It is found in the secreted. Its subcellular location is the target cell membrane. Functionally, antimicrobial peptide with potent activity against a range of Gram-positive and Gram-negative bacteria. Has high hemolytic activity against erythrocytes. May act by disrupting the integrity of the bacterial cell membrane. The protein is Ponericin-W-like 32.2 of Lychas mucronatus (Chinese swimming scorpion).